The sequence spans 202 residues: Ion-translocating oxidoreductase complex subunit G (202 aa).

The helical transmembrane segment at 11-31 (ACLMGFFSFFSLSSVIFVKNI) threads the bilayer. Threonine 176 is subject to FMN phosphoryl threonine.

The protein belongs to the RnfG family. In terms of assembly, the complex is composed of six subunits: RnfA, RnfB, RnfC, RnfD, RnfE and RnfG. It depends on FMN as a cofactor.

The protein localises to the cell inner membrane. In terms of biological role, part of a membrane-bound complex that couples electron transfer with translocation of ions across the membrane. This chain is Ion-translocating oxidoreductase complex subunit G, found in Buchnera aphidicola subsp. Schizaphis graminum (strain Sg).